The chain runs to 150 residues: UPF0178 protein PBPRA1738 (150 aa).

This sequence belongs to the UPF0178 family.

The sequence is that of UPF0178 protein PBPRA1738 from Photobacterium profundum (strain SS9).